The primary structure comprises 338 residues: DNA-directed RNA polymerase subunit alpha (338 aa).

The tract at residues Met1 to Glu234 is alpha N-terminal domain (alpha-NTD). Residues Phe250 to Tyr338 are alpha C-terminal domain (alpha-CTD).

It belongs to the RNA polymerase alpha chain family. As to quaternary structure, homodimer. The RNAP catalytic core consists of 2 alpha, 1 beta, 1 beta' and 1 omega subunit. When a sigma factor is associated with the core the holoenzyme is formed, which can initiate transcription.

It carries out the reaction RNA(n) + a ribonucleoside 5'-triphosphate = RNA(n+1) + diphosphate. DNA-dependent RNA polymerase catalyzes the transcription of DNA into RNA using the four ribonucleoside triphosphates as substrates. In Xanthobacter autotrophicus (strain ATCC BAA-1158 / Py2), this protein is DNA-directed RNA polymerase subunit alpha.